A 321-amino-acid polypeptide reads, in one-letter code: Sideroflexin-3 (321 aa).

N-acetylmethionine is present on Met-1. The next 4 helical transmembrane spans lie at 146 to 164, 174 to 194, 226 to 246, and 266 to 286; these read LGTA…ALGL, LVGR…NIPL, FQVV…PPLI, and LQVG…CALF.

The protein belongs to the sideroflexin family.

It is found in the mitochondrion membrane. It catalyses the reaction L-serine(in) = L-serine(out). Mitochondrial serine transporter that mediates transport of serine into mitochondria, an important step of the one-carbon metabolism pathway. Mitochondrial serine is converted to glycine and formate, which then exits to the cytosol where it is used to generate the charged folates that serve as one-carbon donors. This Homo sapiens (Human) protein is Sideroflexin-3.